The chain runs to 72 residues: Translation initiation factor IF-1 (72 aa).

The S1-like domain maps to 1-72 (MSKQDVIELE…SRGRITWRKK (72 aa)).

The protein belongs to the IF-1 family. Component of the 30S ribosomal translation pre-initiation complex which assembles on the 30S ribosome in the order IF-2 and IF-3, IF-1 and N-formylmethionyl-tRNA(fMet); mRNA recruitment can occur at any time during PIC assembly.

The protein localises to the cytoplasm. Its function is as follows. One of the essential components for the initiation of protein synthesis. Stabilizes the binding of IF-2 and IF-3 on the 30S subunit to which N-formylmethionyl-tRNA(fMet) subsequently binds. Helps modulate mRNA selection, yielding the 30S pre-initiation complex (PIC). Upon addition of the 50S ribosomal subunit IF-1, IF-2 and IF-3 are released leaving the mature 70S translation initiation complex. This Alkaliphilus oremlandii (strain OhILAs) (Clostridium oremlandii (strain OhILAs)) protein is Translation initiation factor IF-1.